Here is a 355-residue protein sequence, read N- to C-terminus: Chorismate synthase (355 aa).

R48 is a binding site for NADP(+). FMN is bound by residues 126-128 (RSS), G278, 293-297 (KPIPS), and R319.

It belongs to the chorismate synthase family. In terms of assembly, homotetramer. Requires FMNH2 as cofactor.

The enzyme catalyses 5-O-(1-carboxyvinyl)-3-phosphoshikimate = chorismate + phosphate. It participates in metabolic intermediate biosynthesis; chorismate biosynthesis; chorismate from D-erythrose 4-phosphate and phosphoenolpyruvate: step 7/7. Functionally, catalyzes the anti-1,4-elimination of the C-3 phosphate and the C-6 proR hydrogen from 5-enolpyruvylshikimate-3-phosphate (EPSP) to yield chorismate, which is the branch point compound that serves as the starting substrate for the three terminal pathways of aromatic amino acid biosynthesis. This reaction introduces a second double bond into the aromatic ring system. In Oleidesulfovibrio alaskensis (strain ATCC BAA-1058 / DSM 17464 / G20) (Desulfovibrio alaskensis), this protein is Chorismate synthase.